We begin with the raw amino-acid sequence, 166 residues long: Peptidoglycan-associated lipoprotein (166 aa).

The signal sequence occupies residues Met1–Gly21. The N-palmitoyl cysteine moiety is linked to residue Cys22. Cys22 is lipidated: S-diacylglycerol cysteine. Residues Ser54–Lys166 form the OmpA-like domain. Residues Val147–Lys166 form a disordered region.

It belongs to the Pal lipoprotein family. The Tol-Pal system is composed of five core proteins: the inner membrane proteins TolA, TolQ and TolR, the periplasmic protein TolB and the outer membrane protein Pal. They form a network linking the inner and outer membranes and the peptidoglycan layer.

The protein localises to the cell outer membrane. In terms of biological role, part of the Tol-Pal system, which plays a role in outer membrane invagination during cell division and is important for maintaining outer membrane integrity. The sequence is that of Peptidoglycan-associated lipoprotein from Pseudomonas putida (Arthrobacter siderocapsulatus).